The following is a 470-amino-acid chain: Macrophage metalloelastase (470 aa).

The signal sequence occupies residues 1–16 (MKFLLILLLQATASGA). Positions 17–105 (LPLNSSTSLE…DVHHFREMPG (89 aa)) are cleaved as a propeptide — activation peptide. Asn20 carries N-linked (GlcNAc...) asparagine glycosylation. The Cysteine switch motif lies at 90-97 (PRCGVPDV). Zn(2+) is bound at residue Cys92. Asp124 and Asp158 together coordinate Ca(2+). 2 residues coordinate Zn(2+): His168 and Asp170. Residues Asp175, Gly176, Gly178, and Ile180 each coordinate Ca(2+). His183 is a binding site for Zn(2+). Ca(2+)-binding residues include Gly190, Gly192, and Asp194. His196 contacts Zn(2+). 3 residues coordinate Ca(2+): Asp198, Glu199, and Glu201. Position 218 (His218) interacts with Zn(2+). Residue Glu219 is part of the active site. Zn(2+) contacts are provided by His222 and His228. 4 Hemopexin repeats span residues 279 to 328 (PALC…WPTL), 329 to 375 (PSGI…GFPN), 377 to 425 (VKKI…FQGI), and 426 to 470 (GPKI…WFGC). Cysteines 282 and 470 form a disulfide. An N-linked (GlcNAc...) asparagine glycan is attached at Asn285. Positions 289, 333, 381, and 430 each coordinate Ca(2+).

Belongs to the peptidase M10A family. Ca(2+) is required as a cofactor. Requires Zn(2+) as cofactor. As to expression, found in alveolar macrophages but not in peripheral blood monocytes.

The protein localises to the secreted. It is found in the extracellular space. Its subcellular location is the extracellular matrix. It catalyses the reaction Hydrolysis of soluble and insoluble elastin. Specific cleavages are also produced at 14-Ala-|-Leu-15 and 16-Tyr-|-Leu-17 in the B chain of insulin.. Its function is as follows. May be involved in tissue injury and remodeling. Has significant elastolytic activity. Can accept large and small amino acids at the P1' site, but has a preference for leucine. Aromatic or hydrophobic residues are preferred at the P1 site, with small hydrophobic residues (preferably alanine) occupying P3. The sequence is that of Macrophage metalloelastase (MMP12) from Homo sapiens (Human).